A 1259-amino-acid chain; its full sequence is Protein flightless-1 homolog (1259 aa).

LRR repeat units lie at residues Leu-7–Met-32, Thr-33–Leu-55, Gln-56–Leu-78, Asn-80–Leu-103, Asp-104–Ser-126, Asn-128–Asn-149, Leu-150–Leu-173, Leu-176–Gln-201, Leu-222–Leu-245, Asn-247–Trp-268, Thr-269–Leu-291, Lys-293–Leu-316, Ser-317–Cys-339, Gly-340–Thr-363, and Leu-365–Arg-385. Gelsolin-like repeat units follow at residues Ile-509–Phe-589, Asn-628–Trp-702, Asp-757–Phe-830, and Glu-1170–Asp-1225.

Expressed in ventricular cardiomyocytes, where it particularly localizes to intercalated disks and costamere-like structures (at protein level).

It is found in the nucleus. The protein resides in the cytoplasm. Its subcellular location is the cytoskeleton. It localises to the microtubule organizing center. The protein localises to the centrosome. It is found in the cell junction. The protein resides in the focal adhesion. Functionally, is a regulator of actin polymerization, required for proper myofibril organization and the assembly of cardiomyocyte cell adhesion complexes. Is a regulator of the length of sarcomeric thin filaments. Regulates cytoskeletal rearrangements involved in cytokinesis and cell migration, by inhibiting Rac1-dependent paxillin phosphorylation. May play a role as coactivator in transcriptional activation by hormone-activated nuclear receptors (NR) and acts in cooperation with NCOA2 and CARM1. Involved in estrogen hormone signaling. In Danio rerio (Zebrafish), this protein is Protein flightless-1 homolog.